A 292-amino-acid polypeptide reads, in one-letter code: 4-hydroxybenzoate octaprenyltransferase (292 aa).

A run of 8 helical transmembrane segments spans residues 23 to 43 (PIGI…AGEG), 47 to 67 (PGVA…GCVI), 98 to 118 (LILF…MNWL), 141 to 161 (HLPQ…TFAA), 164 to 184 (GSIP…ALIY), 211 to 231 (YDRE…AGIG), 233 to 253 (YLGL…FSVY), and 270 to 290 (FLNN…DYLW).

The protein belongs to the UbiA prenyltransferase family. Mg(2+) serves as cofactor.

The protein resides in the cell inner membrane. The catalysed reaction is all-trans-octaprenyl diphosphate + 4-hydroxybenzoate = 4-hydroxy-3-(all-trans-octaprenyl)benzoate + diphosphate. It functions in the pathway cofactor biosynthesis; ubiquinone biosynthesis. Its function is as follows. Catalyzes the prenylation of para-hydroxybenzoate (PHB) with an all-trans polyprenyl group. Mediates the second step in the final reaction sequence of ubiquinone-8 (UQ-8) biosynthesis, which is the condensation of the polyisoprenoid side chain with PHB, generating the first membrane-bound Q intermediate 3-octaprenyl-4-hydroxybenzoate. The polypeptide is 4-hydroxybenzoate octaprenyltransferase (Methylococcus capsulatus (strain ATCC 33009 / NCIMB 11132 / Bath)).